The following is a 579-amino-acid chain: MAVFNQKSVSDMIKEFRKNWRALCNSERTTLCGADSMLLALQLSMAENNKQHSGEFTVSLSDVLLTWKYLLHEKLNLPVENMDVTDHYEDVRKIYDDFLKNSNMLDLIDVYQKCRALTSNCENYNTVSPSQLLDFLSGKQYAVGDETDLSIPTSPTSKYNRDNEKVQLLARKIIFSYLNLLVNSKNDLAVAYILNIPDRGLGREAFTDLKHAAREKQMSIFLVATSFIRTIELGGKGYAPPPSDPLRTHVKGLSNFINFIDKLDEILGEIPNPSIAGGQILSVIKMQLIKGQNSRDPFCKAIEEVAQDLDLRIKNIINSQEGVVALSTTDISPARPKSHAINHGTAYCGRDTVKALLVLLDEEAANAPTKNKAELLYDEENTIHHHGTSILTLFRSPTQVNNSIKPLRERICVSMQEKKIKMKQTLIRSQFACTYKDDYMISKDNWNNVNLASKPLCVLYMENDLSEGVNPSVGRSTIGTSFGNVHLDRSKNEKVSRKSTSQTGNKSSKRKQVDLDGENILCDNRNEPPQHKNAKIPKKSNDSQNRLYGKLAKVAKSNKCTAKDKLISGQAKLTQFFRL.

The disordered stretch occupies residues 480–543; it reads TSFGNVHLDR…AKIPKKSNDS (64 aa). The span at 486–496 shows a compositional bias: basic and acidic residues; sequence HLDRSKNEKVS.

It belongs to the PARI family. Interacts with RAD51 and PCNA. Interacts with PARP1. Interacts with TASOR. Restricted to testis. Overexpressed in multiple cancer cells.

It localises to the cytoplasm. The protein localises to the nucleus. Required to suppress inappropriate homologous recombination, thereby playing a central role DNA repair and in the maintenance of genomic stability. Antagonizes homologous recombination by interfering with the formation of the RAD51-DNA homologous recombination structure. Binds single-strand DNA and poly(A) homopolymers. Positively regulate the poly(ADP-ribosyl)ation activity of PARP1; however such function may be indirect. This Homo sapiens (Human) protein is PCNA-interacting partner (PARPBP).